Reading from the N-terminus, the 534-residue chain is Probable protein kinase UbiB (534 aa).

Residues 23 to 43 (DLLFDLPLPWFLLALRFALPW) traverse the membrane as a helical segment. A Protein kinase domain is found at 125–492 (RFDIEPLASA…WHKRKDDWFL (368 aa)). ATP contacts are provided by residues 131-139 (LASASVAQV) and Lys-153. The Proton acceptor role is filled by Asp-288. Helical transmembrane passes span 490–510 (WFLRLLGTAHLGGGAVLAAGG) and 512–532 (LHELGHWPAGIMIAVGLYLIV).

The protein belongs to the ABC1 family. UbiB subfamily.

Its subcellular location is the cell inner membrane. Its pathway is cofactor biosynthesis; ubiquinone biosynthesis [regulation]. Is probably a protein kinase regulator of UbiI activity which is involved in aerobic coenzyme Q (ubiquinone) biosynthesis. This Pseudomonas fluorescens (strain ATCC BAA-477 / NRRL B-23932 / Pf-5) protein is Probable protein kinase UbiB.